The following is a 186-amino-acid chain: GMP synthase [glutamine-hydrolyzing] subunit A (186 aa).

The 185-residue stretch at 2-186 (SIVIINNFGQ…ENFNKICENY (185 aa)) folds into the Glutamine amidotransferase type-1 domain. The active-site Nucleophile is C76. Active-site residues include H163 and E165.

Heterodimer composed of a glutamine amidotransferase subunit (A) and a GMP-binding subunit (B).

The catalysed reaction is XMP + L-glutamine + ATP + H2O = GMP + L-glutamate + AMP + diphosphate + 2 H(+). It participates in purine metabolism; GMP biosynthesis; GMP from XMP (L-Gln route): step 1/1. Functionally, catalyzes the synthesis of GMP from XMP. The sequence is that of GMP synthase [glutamine-hydrolyzing] subunit A from Methanosphaera stadtmanae (strain ATCC 43021 / DSM 3091 / JCM 11832 / MCB-3).